A 432-amino-acid chain; its full sequence is Adenylosuccinate synthetase (432 aa).

GTP contacts are provided by residues 12-18 (GDEGKGK) and 40-42 (GHT). The active-site Proton acceptor is D13. D13 and G40 together coordinate Mg(2+). IMP contacts are provided by residues 13-16 (DEGK), 38-41 (NAGH), T132, R146, Q226, T241, and R305. H41 (proton donor) is an active-site residue. 301-307 (TVTGRKR) lines the substrate pocket. Residues R307, 333 to 335 (KLD), and 415 to 417 (STS) contribute to the GTP site.

This sequence belongs to the adenylosuccinate synthetase family. Homodimer. Requires Mg(2+) as cofactor.

It localises to the cytoplasm. The catalysed reaction is IMP + L-aspartate + GTP = N(6)-(1,2-dicarboxyethyl)-AMP + GDP + phosphate + 2 H(+). Its pathway is purine metabolism; AMP biosynthesis via de novo pathway; AMP from IMP: step 1/2. Plays an important role in the de novo pathway of purine nucleotide biosynthesis. Catalyzes the first committed step in the biosynthesis of AMP from IMP. The chain is Adenylosuccinate synthetase from Agrobacterium fabrum (strain C58 / ATCC 33970) (Agrobacterium tumefaciens (strain C58)).